The chain runs to 310 residues: Olfactory receptor 5T7 (310 aa).

The Extracellular portion of the chain corresponds to 1 to 23 (MENITEVTEFILMGFTDNADLEI). Asn3 is a glycosylation site (N-linked (GlcNAc...) asparagine). Residues 24–44 (LSFFLFLAIYLFTLMGNLGLI) traverse the membrane as a helical segment. The Cytoplasmic segment spans residues 45–52 (TLVIGDSR). Residues 53 to 73 (LHNPMYYFLSVLSSVDACYST) traverse the membrane as a helical segment. At 74–97 (VITPQMVVDFVSEKKVISFIGCAT) the chain is on the extracellular side. A disulfide bridge links Cys95 with Cys187. Residues 98-118 (QMFLAVTFGTTECFLLAAMAY) form a helical membrane-spanning segment. The Cytoplasmic segment spans residues 119-131 (DRYVAIHNPLMYV). A helical transmembrane segment spans residues 132–152 (VSMSPRVYVPLIIASYAGGIL). Over 153–194 (HAVIHTVATFRLSFCGSNKISHIFCDIPPLLAISCSDTHFNQ) the chain is Extracellular. A helical transmembrane segment spans residues 195–215 (LLLFYCAGFIEVVTILIVLLS). Residues 216 to 235 (YGFILSVILKTRSTEGKRKV) lie on the Cytoplasmic side of the membrane. Residues 236-256 (FSTCGSHLMAVSTFHGTVLFM) traverse the membrane as a helical segment. At 257 to 269 (YVRPSDSYALEHD) the chain is on the extracellular side. The chain crosses the membrane as a helical span at residues 270-290 (MMVSIFYSIVIPMLNPLIYSL). Topologically, residues 291 to 310 (RNKDVKEAIKKVFGKRILCG) are cytoplasmic.

Belongs to the G-protein coupled receptor 1 family.

The protein localises to the cell membrane. Its function is as follows. Potential odorant receptor. The sequence is that of Olfactory receptor 5T7 from Mus musculus (Mouse).